Reading from the N-terminus, the 376-residue chain is MTLAAQPILLTPGPLTTSDTTRDAMLRDWGSWDSDFNAITARLRERLLQIVHGEGTHECVPLQGSGTFSVEAAIGTLVPRDGHVLVPNNGAYCQRIAKICRVLGRQLTTIDYSEDRRVDPADVERALAADPTITHVALVHCETGAGVLNPLHDIAQVVAKHGRALIVDAMSSFGAIDIDARTTPFDAVIAASGKCLEGVPGLGFVIAKRSTLERCEGNSHSLAMDLYDQWVYMQRTTQWRFTPPTHVVAALDAAVGQYVDEGGLAARGGRYQRNYRALIDGMLALGFRPFLDPAIQAPIIVTFHAPDDPNYDFKRFYQEVKKRGYILYPGKLTEVETFRVGCIGHFGEAGIPGAVAAIADTLRAMGVRRVSAEAAA.

Lys194 is subject to N6-(pyridoxal phosphate)lysine.

This sequence belongs to the class-V pyridoxal-phosphate-dependent aminotransferase family. PhnW subfamily. Homodimer. Pyridoxal 5'-phosphate is required as a cofactor.

It catalyses the reaction (2-aminoethyl)phosphonate + pyruvate = phosphonoacetaldehyde + L-alanine. Functionally, involved in phosphonate degradation. In Burkholderia lata (strain ATCC 17760 / DSM 23089 / LMG 22485 / NCIMB 9086 / R18194 / 383), this protein is 2-aminoethylphosphonate--pyruvate transaminase 2.